The chain runs to 80 residues: Small ribosomal subunit protein uS17 (80 aa).

It belongs to the universal ribosomal protein uS17 family. As to quaternary structure, part of the 30S ribosomal subunit.

In terms of biological role, one of the primary rRNA binding proteins, it binds specifically to the 5'-end of 16S ribosomal RNA. This is Small ribosomal subunit protein uS17 from Beijerinckia indica subsp. indica (strain ATCC 9039 / DSM 1715 / NCIMB 8712).